A 328-amino-acid polypeptide reads, in one-letter code: Cytosolic Fe-S cluster assembly factor NBP35 (328 aa).

Residues Cys27, Cys41, Cys44, and Cys50 each contribute to the [4Fe-4S] cluster site. 80–87 (GKGGVGKS) is a binding site for ATP. [4Fe-4S] cluster-binding residues include Cys253 and Cys256.

Belongs to the Mrp/NBP35 ATP-binding proteins family. NUBP1/NBP35 subfamily. As to quaternary structure, heterotetramer of 2 NBP35 and 2 CFD1 chains. Requires [4Fe-4S] cluster as cofactor.

The protein resides in the cytoplasm. The protein localises to the nucleus. In terms of biological role, component of the cytosolic iron-sulfur (Fe/S) protein assembly (CIA) machinery. Required for maturation of extramitochondrial Fe-S proteins. The NBP35-CFD1 heterotetramer forms a Fe-S scaffold complex, mediating the de novo assembly of an Fe-S cluster and its transfer to target apoproteins. Required for biogenesis and export of both ribosomal subunits, which may reflect a role in assembly of the Fe/S clusters in RLI1, a protein which performs rRNA processing and ribosome export. This Saccharomyces cerevisiae (strain ATCC 204508 / S288c) (Baker's yeast) protein is Cytosolic Fe-S cluster assembly factor NBP35.